A 339-amino-acid chain; its full sequence is MLKRLLSKCAEGETLTEAEAYEAMNAVMSGEATDSQIASLVSILRVRGETVDEIAGFVRAMRDRMTTIDAGDDVIDTCGTGGDGAATFNVSTAAAIVVSSLGVKVAKHGNRAVSSKSGSADVLERLGIDIPASPEAAKQALETKGLAFLFAPLYHAAMKYAAGPRKEIGFRTIFNLIGPLANPARCKRQVIGVYSTRYAEKLAETMRRLGSEHVVFVTGRDGLDECSIAAETDVVELKDGDIRRFVLTPESVGLRXGGLADVQVRSSEESAALLEAVMDGTAPASAIDITALNAGVALYAAGKAETIAAGVAMAKDAILVKTAYEQLQRLRRKEVVHGA.

Residues G79, G82 to D83, T87, N89 to T92, K107 to S115, and S119 contribute to the 5-phospho-alpha-D-ribose 1-diphosphate site. Position 79 (G79) interacts with anthranilate. S91 contacts Mg(2+). Position 110 (N110) interacts with anthranilate. R165 contributes to the anthranilate binding site. D224 and E225 together coordinate Mg(2+).

It belongs to the anthranilate phosphoribosyltransferase family. In terms of assembly, homodimer. Mg(2+) is required as a cofactor.

The catalysed reaction is N-(5-phospho-beta-D-ribosyl)anthranilate + diphosphate = 5-phospho-alpha-D-ribose 1-diphosphate + anthranilate. Its pathway is amino-acid biosynthesis; L-tryptophan biosynthesis; L-tryptophan from chorismate: step 2/5. Its function is as follows. Catalyzes the transfer of the phosphoribosyl group of 5-phosphorylribose-1-pyrophosphate (PRPP) to anthranilate to yield N-(5'-phosphoribosyl)-anthranilate (PRA). This is Anthranilate phosphoribosyltransferase from Geobacillus stearothermophilus (Bacillus stearothermophilus).